Reading from the N-terminus, the 476-residue chain is Adenosylhomocysteinase (476 aa).

Substrate is bound by residues Thr67, Asp142, and Glu202. 203-205 (TTT) is a binding site for NAD(+). Residues Lys232 and Asp236 each contribute to the substrate site. NAD(+) contacts are provided by residues Asn237, 266-271 (GYGDVG), Glu289, Asn324, 345-347 (IGH), and Asn390.

The protein belongs to the adenosylhomocysteinase family. NAD(+) is required as a cofactor.

The protein localises to the cytoplasm. It catalyses the reaction S-adenosyl-L-homocysteine + H2O = L-homocysteine + adenosine. It functions in the pathway amino-acid biosynthesis; L-homocysteine biosynthesis; L-homocysteine from S-adenosyl-L-homocysteine: step 1/1. Its function is as follows. May play a key role in the regulation of the intracellular concentration of adenosylhomocysteine. This is Adenosylhomocysteinase from Parasynechococcus marenigrum (strain WH8102).